A 774-amino-acid chain; its full sequence is Neprilysin-2 (774 aa).

Residues 1 to 20 (MQTVIQNPNWWRRRNKLEKS) lie on the Cytoplasmic side of the membrane. Residues 21–41 (LLVSLGIMFVVLATGFGLWIG) form a helical; Signal-anchor for type II membrane protein membrane-spanning segment. The Extracellular portion of the chain corresponds to 42-774 (KVLRTSPPSN…MNPVQKCEVW (733 aa)). Residues 50–79 (SNPQATALHGDSTTINQVPTGTASKGKSGD) are disordered. Over residues 60 to 74 (DSTTINQVPTGTASK) the composition is skewed to polar residues. One can recognise a Peptidase M13 domain in the interval 83–774 (VCLTQECIHT…MNPVQKCEVW (692 aa)). 5 disulfide bridges follow: Cys-84–Cys-89, Cys-107–Cys-759, Cys-115–Cys-719, Cys-171–Cys-424, and Cys-646–Cys-771. N-linked (GlcNAc...) asparagine glycosylation is found at Asn-173, Asn-239, Asn-264, Asn-305, Asn-315, Asn-358, and Asn-554. His-609 contacts Zn(2+). Glu-610 is a catalytic residue. Zn(2+) is bound at residue His-613. The N-linked (GlcNAc...) asparagine glycan is linked to Asn-653. Glu-671 contacts Zn(2+). The Proton donor role is filled by Asp-675.

Belongs to the peptidase M13 family. It depends on Zn(2+) as a cofactor. Post-translationally, N-glycosylated. In terms of processing, the soluble form is probably produced by proteolytic cleavage. As to expression, detected in the stellate cells in the main segment and the bar-shaped cells in the initial segment of male and female Malpighian tubules (at protein level). Expressed in the spermatheca (at protein level). Expressed in the somatic cyst cells of the testes, with increased expression at the tail end of elongating cysts. Expressed in the ovaries with strong expression in the posterior polar cells and in border cells of stage 8, 9, and 10 follicles. In adults and third-instar larvae, expressed in the brain, ventral ganglion, and stellate cells. Also expressed in the foregut and the imaginal disks (eye, antennal and leg) of third-instar larvae. In stage 17 embryos, expressed in the tracheal system, foregut, hindgut and epidermis. Also expressed in the stellate cell progenitors of the caudal visceral mesoderm in embryos.

It localises to the cell membrane. The protein resides in the secreted. The catalysed reaction is Preferential cleavage of polypeptides between hydrophobic residues, particularly with Phe or Tyr at P1'.. Its function is as follows. Metalloendoprotease which cleaves peptides such as tachykinin peptide TK-2 at the amino side of hydrophobic residues. Functions in female fertility, embryogenesis and memory formation. Required in females for normal patterns of egg laying, probably due to its function in sperm retention and preventing sperm displacement by rival ejaculates. Also required for normal patterns of hatching due to its important role in early embryonic development. Required in the dorsal paired medial neurons for the proper formation of middle-term memory. Also required in the mushroom body neurons where it functions redundantly with neprilysins Nep3 and Nep4 in normal long-term memory formation. The sequence is that of Neprilysin-2 from Drosophila melanogaster (Fruit fly).